The chain runs to 228 residues: DNA-binding response regulator MtrA (228 aa).

Positions 7–120 (RILVVDDDPS…ELVARVRARL (114 aa)) constitute a Response regulatory domain. Asp-56 is subject to 4-aspartylphosphate. A DNA-binding region (ompR/PhoB-type) is located at residues 128–227 (AEMLSIGDVE…VRGVGYKAGP (100 aa)).

In terms of assembly, probably a monomer when inactive, phosphorylation may permit it to oligomerize. The monomeric form does not seem to be phosphorylated. Phosphorylated by MtrB.

The protein localises to the cytoplasm. Its function is as follows. Member of the two-component regulatory system MtrA/MtrB, responding to environmental signals. Controls expression of a number of genes including dnaA, ripA, fbpB and probably itself. Probably plays a role in cell division. In Mycolicibacterium smegmatis (strain ATCC 700084 / mc(2)155) (Mycobacterium smegmatis), this protein is DNA-binding response regulator MtrA (mtrA).